The primary structure comprises 208 residues: Histone H1t (208 aa).

Positions 1-12 (MSETAPAASSTL) are enriched in polar residues. Residues 1–39 (MSETAPAASSTLVPAPVEKPSSKRRGKKPGLAPARKPRG) are disordered. Serine 9 carries the phosphoserine modification. Positions 38–111 (RGFSVSKLIP…GASGSFKLSK (74 aa)) constitute an H15 domain. Arginine 56 is modified (citrulline). The interval 95–208 (LVQTKGTGAS…TDLRKAAGRK (114 aa)) is disordered. The span at 121 to 134 (KGKKSASAKAKKMG) shows a compositional bias: basic residues. A Phosphoserine modification is found at serine 141. The segment covering 143–154 (KSSKTKAVKKPK) has biased composition (basic residues). Threonine 156 is subject to Phosphothreonine. Phosphoserine occurs at positions 163 and 178. The segment covering 199–208 (TDLRKAAGRK) has biased composition (basic and acidic residues).

It belongs to the histone H1/H5 family. Post-translationally, phosphorylated in early spermatids. In terms of processing, citrullination at Arg-56 (H1R54ci) by PADI4 takes place within the DNA-binding site of H1 and results in its displacement from chromatin and global chromatin decondensation, thereby promoting pluripotency and stem cell maintenance. In terms of tissue distribution, testis-specific.

It is found in the nucleus. It localises to the chromosome. Its function is as follows. Testis-specific histone H1 that forms less compacted chromatin compared to other H1 histone subtypes. Formation of more relaxed chromatin may be required to promote chromatin architecture required for proper chromosome regulation during meiosis, such as homologous recombination. Histones H1 act as linkers that bind to nucleosomes and compact polynucleosomes into a higher-order chromatin configuration. This is Histone H1t from Mus musculus (Mouse).